A 583-amino-acid chain; its full sequence is Protein cps3 (583 aa).

2 C3H1-type zinc fingers span residues 35–62 (SLQHVPCKFFRQGTCTSGKNCIFSHDLE) and 64–91 (ATEKTICKYFQKGNCKFGSKCALEHVLP). Disordered regions lie at residues 318–346 (LGRPTKSPSVPTSVGSNKSRKFPGINGST), 471–490 (KVSSNLNSGNPTPYNSYNGT), and 504–532 (RQESEKATPPSLNKVSQEPLTATTPKNLG). Composition is skewed to polar residues over residues 323 to 334 (KSPSVPTSVGSN), 475 to 490 (NLNSGNPTPYNSYNGT), and 513 to 532 (PSLNKVSQEPLTATTPKNLG).

Its subcellular location is the cytoplasm. Its function is as follows. Responsible for supersensitivity to the spindle poison, isopropyl N-3-chlorophenyl carbamate. Has a role in meiosis. In Schizosaccharomyces pombe (strain 972 / ATCC 24843) (Fission yeast), this protein is Protein cps3 (cps3).